Here is a 364-residue protein sequence, read N- to C-terminus: Mannose-1-phosphate guanyltransferase (364 aa).

It belongs to the transferase hexapeptide repeat family.

It is found in the cytoplasm. It catalyses the reaction alpha-D-mannose 1-phosphate + GTP + H(+) = GDP-alpha-D-mannose + diphosphate. It functions in the pathway nucleotide-sugar biosynthesis; GDP-alpha-D-mannose biosynthesis; GDP-alpha-D-mannose from alpha-D-mannose 1-phosphate (GTP route): step 1/1. Functionally, involved in cell wall synthesis where it is required for glycosylation. Involved in cell cycle progression through cell-size checkpoint. In Gibberella zeae (strain ATCC MYA-4620 / CBS 123657 / FGSC 9075 / NRRL 31084 / PH-1) (Wheat head blight fungus), this protein is Mannose-1-phosphate guanyltransferase (MPG1).